The chain runs to 384 residues: Queuine tRNA-ribosyltransferase (384 aa).

The active-site Proton acceptor is D92. Substrate is bound by residues 92 to 96 (DSGGF), D146, Q190, and G217. Residues 248 to 254 (GVGRPED) are RNA binding. The active-site Nucleophile is the D267. Residues 272-276 (TRHAR) are RNA binding; important for wobble base 34 recognition. The Zn(2+) site is built by C305, C307, C310, and H337.

The protein belongs to the queuine tRNA-ribosyltransferase family. As to quaternary structure, homodimer. Within each dimer, one monomer is responsible for RNA recognition and catalysis, while the other monomer binds to the replacement base PreQ1. Requires Zn(2+) as cofactor.

It catalyses the reaction 7-aminomethyl-7-carbaguanine + guanosine(34) in tRNA = 7-aminomethyl-7-carbaguanosine(34) in tRNA + guanine. It participates in tRNA modification; tRNA-queuosine biosynthesis. Catalyzes the base-exchange of a guanine (G) residue with the queuine precursor 7-aminomethyl-7-deazaguanine (PreQ1) at position 34 (anticodon wobble position) in tRNAs with GU(N) anticodons (tRNA-Asp, -Asn, -His and -Tyr). Catalysis occurs through a double-displacement mechanism. The nucleophile active site attacks the C1' of nucleotide 34 to detach the guanine base from the RNA, forming a covalent enzyme-RNA intermediate. The proton acceptor active site deprotonates the incoming PreQ1, allowing a nucleophilic attack on the C1' of the ribose to form the product. After dissociation, two additional enzymatic reactions on the tRNA convert PreQ1 to queuine (Q), resulting in the hypermodified nucleoside queuosine (7-(((4,5-cis-dihydroxy-2-cyclopenten-1-yl)amino)methyl)-7-deazaguanosine). In Xylella fastidiosa (strain M12), this protein is Queuine tRNA-ribosyltransferase.